Here is a 133-residue protein sequence, read N- to C-terminus: Small ribosomal subunit protein uS8c (133 aa).

2 disordered regions span residues 1–23 (MGND…GAET) and 44–133 (FSGN…HVWR). Composition is skewed to polar residues over residues 12–23 (APRNASSRGAET) and 55–66 (TNRFPVSTSKYQ). Residues 67–81 (GRTRKARITTRRRVS) show a composition bias toward basic residues. Positions 114-133 (TDREARQKRIGGEAPRHVWR) are enriched in basic and acidic residues.

This sequence belongs to the universal ribosomal protein uS8 family. As to quaternary structure, part of the 30S ribosomal subunit.

It is found in the plastid. The protein resides in the chloroplast. One of the primary rRNA binding proteins, it binds directly to 16S rRNA central domain where it helps coordinate assembly of the platform of the 30S subunit. This Selaginella uncinata (Blue spike-moss) protein is Small ribosomal subunit protein uS8c (rps8).